We begin with the raw amino-acid sequence, 440 residues long: Transposon Ty1-DR3 Gag polyprotein (440 aa).

Polar residues-rich tracts occupy residues 1 to 10 (MESQQLSNYP), 48 to 60 (TKANSQQTTTPAS), and 127 to 152 (QSQFPQYPSSVGTPLSTPSPESGNTF). 3 disordered regions span residues 1–93 (MESQ…MMTQ), 126–173 (PQSQ…RPPP), and 352–440 (GSRN…PETY). Positions 153–165 (TDSSSADSDMTST) are enriched in low complexity. The interval 299–401 (NNGIHINNKV…NSKSKTARAH (103 aa)) is RNA-binding. Positions 402-428 (NVSTSINSPSTDNDSISKSTTEPIQLN) are enriched in polar residues. Position 416 is a phosphoserine (serine 416). Residues 429–440 (NKHDLHLRPETY) are compositionally biased toward basic and acidic residues.

Homotrimer.

The protein localises to the cytoplasm. Capsid protein (CA) is the structural component of the virus-like particle (VLP), forming the shell that encapsulates the retrotransposons dimeric RNA genome. The particles are assembled from trimer-clustered units and there are holes in the capsid shells that allow for the diffusion of macromolecules. CA also has nucleocapsid-like chaperone activity, promoting primer tRNA(i)-Met annealing to the multipartite primer-binding site (PBS), dimerization of Ty1 RNA and initiation of reverse transcription. The sequence is that of Transposon Ty1-DR3 Gag polyprotein (TY1A-DR3) from Saccharomyces cerevisiae (strain ATCC 204508 / S288c) (Baker's yeast).